A 1981-amino-acid polypeptide reads, in one-letter code: Nonribosomal peptide synthetase rstn8 (1981 aa).

Residues 251–638 are adenylation; that stretch reads SYAALEQESA…ELGEIEYQAS (388 aa). Positions 763 to 840 constitute a Carrier 1 domain; sequence HHAGQKYDEM…ELFHRSQKTP (78 aa). The residue at position 800 (Ser800) is an O-(pantetheine 4'-phosphoryl)serine. Residues 883-1293 form a condensation 1 region; it reads EDIYPCSPLQ…DASMGTILSQ (411 aa). The region spanning 1438–1514 is the Carrier 2 domain; that stretch reads EPLLPLEATL…CLASTLNSRP (77 aa). Ser1475 carries the post-translational modification O-(pantetheine 4'-phosphoryl)serine. Residues 1586–1978 are condensation 1; the sequence is EEQIDLVSFA…TFAQSIERII (393 aa). The disordered stretch occupies residues 1754–1774; that stretch reads HHHHQHEGRQHHGASETNGNR.

This sequence belongs to the NRP synthetase family. It depends on pantetheine 4'-phosphate as a cofactor.

It catalyses the reaction 2 L-tryptophan = cyclo(L-Trp-L-Trp) + 2 H2O. It functions in the pathway alkaloid biosynthesis. Functionally, nonribosomal peptide synthetase; part of the gene cluster that mediates the biosynthesis of okaramine B, a prenylated indole alkaloid that possesses an unusual octacyclic ring system, including a four-membered azetidine ring and an eight-membered azocine ring, and that exhibits insecticidal activity against silkworm larvae. Within the pathway, okaA acts as a bimodular non-ribosomal peptide synthetase (NRPS) that condenses two tryptophan molecules into cyclo(L-Trp-L-Trp). Prenylation by the prenyltransferase okaC then leads to the formation of cyclo(N8-(alpha,alpha-dimethylallyl)-L-Trp-6a-(alpha,alpha-dime-thylallyl)-L-Trp). This is followed by indole 2,3-epoxidation by the FAD-dependent monooxygenase okaB to facilitate the formation of the hexahydropyrrolo[2,3-b]indole (HPI) moiety of okaramine C. The cytochrome P450 monooxygenase okaD then likely catalyzes formation of the eight-membered ring of okaramine A. The dioxygenase okaE further forms the unusual 2-dimethyl-3-methyl-azetidine ring to yield 12-deshydroxyl okaramine E, as well as the hydroxylation of 12-deshydroxyl okaramine E to produce okaramine E. The cytochrome P450 monoxygenase okaG converts 12-deshydroxyl okaramine E into 3-desmethyl okaramine B which is further methylated by the methyltransferase okaF into okaramine B. In a shunt pathway, okaG and okaF together are also able to convert okaramine E into okaramine D. Okaramine H is produced by nonenzymatic conversion from okaramine A. This is Nonribosomal peptide synthetase rstn8 from Penicillium ochrochloron.